The following is a 311-amino-acid chain: Methionyl-tRNA formyltransferase (311 aa).

A (6S)-5,6,7,8-tetrahydrofolate-binding site is contributed by 108 to 111 (SILP).

Belongs to the Fmt family.

The catalysed reaction is L-methionyl-tRNA(fMet) + (6R)-10-formyltetrahydrofolate = N-formyl-L-methionyl-tRNA(fMet) + (6S)-5,6,7,8-tetrahydrofolate + H(+). Functionally, attaches a formyl group to the free amino group of methionyl-tRNA(fMet). The formyl group appears to play a dual role in the initiator identity of N-formylmethionyl-tRNA by promoting its recognition by IF2 and preventing the misappropriation of this tRNA by the elongation apparatus. This Sorangium cellulosum (strain So ce56) (Polyangium cellulosum (strain So ce56)) protein is Methionyl-tRNA formyltransferase.